The primary structure comprises 198 residues: Inosine triphosphate pyrophosphatase (198 aa).

An N-acetylalanine modification is found at Ala2. An ITP-binding site is contributed by 14–19 (TGNAKK). Residue Glu44 participates in Mg(2+) binding. ITP-binding positions include Lys56, 72–73 (DT), and Lys89. Ser146 carries the post-translational modification Phosphoserine. Residues 149–152 (FGWD), Lys172, and 177–178 (HR) each bind ITP.

Belongs to the HAM1 NTPase family. As to quaternary structure, homodimer. It depends on Mg(2+) as a cofactor. The cofactor is Mn(2+).

Its subcellular location is the cytoplasm. The enzyme catalyses ITP + H2O = IMP + diphosphate + H(+). It catalyses the reaction dITP + H2O = dIMP + diphosphate + H(+). It carries out the reaction XTP + H2O = XMP + diphosphate + H(+). The catalysed reaction is N(6)-hydroxy-dATP + H2O = N(6)-hydroxy-dAMP + diphosphate + H(+). Pyrophosphatase that hydrolyzes the non-canonical purine nucleotides inosine triphosphate (ITP), deoxyinosine triphosphate (dITP) as well as 2'-deoxy-N-6-hydroxylaminopurine triphosphate (dHAPTP) and xanthosine 5'-triphosphate (XTP) to their respective monophosphate derivatives. The enzyme does not distinguish between the deoxy- and ribose forms. Probably excludes non-canonical purines from RNA and DNA precursor pools, thus preventing their incorporation into RNA and DNA and avoiding chromosomal lesions. This Mus musculus (Mouse) protein is Inosine triphosphate pyrophosphatase (Itpa).